The primary structure comprises 631 residues: Pro-interleukin-16 (631 aa).

2 disordered regions span residues 30–269 (ENPG…FPLT) and 317–344 (PKEG…ASDT). Residues 132–144 (SSSSSSIKQRISS) show a composition bias toward low complexity. Residue S221 is modified to Phosphoserine. Residues 322–344 (SPTSSSNEDSAANGSAETSASDT) are compositionally biased toward polar residues. Residues 405–501 (KQLDSIHVTI…IVTRKLTAES (97 aa)) form an interaction with PPP1R12A, PPP1R12B and PPP1R12C region. PDZ domains follow at residues 411-496 (HVTI…VTRK) and 533-618 (TVTL…IRRK).

In terms of assembly, homotetramer. Pro-interleukin-16 interacts (via PDZ 2 domain) with PPP1R12A, PPP1R12B and PPP1R12C. Pro-interleukin-16 interacts with GRIN2A. Pro-interleukin-16 interacts with GABPB1. Pro-interleukin-16 interacts (via PDZ 3 domain) with HDAC3.

It is found in the secreted. Its subcellular location is the cytoplasm. It localises to the nucleus. Interleukin-16 stimulates a migratory response in CD4+ lymphocytes, monocytes, and eosinophils. Primes CD4+ T-cells for IL-2 and IL-15 responsiveness. Also induces T-lymphocyte expression of interleukin 2 receptor. Ligand for CD4. Functionally, pro-interleukin-16 is involved in cell cycle progression in T-cells. Appears to be involved in transcriptional regulation of SKP2 and is probably part of a transcriptional repression complex on the core promoter of the SKP2 gene. May act as a scaffold for GABPB1 (the DNA-binding subunit the GABP transcription factor complex) and HDAC3 thus maintaining transcriptional repression and blocking cell cycle progression in resting T-cells. This chain is Pro-interleukin-16 (IL16), found in Chlorocebus aethiops (Green monkey).